Reading from the N-terminus, the 158-residue chain is SUMO-conjugating enzyme UBC9 (158 aa).

One can recognise a UBC core domain in the interval 4-157 (IALSRLAQER…VRAQAKKFAP (154 aa)). The interval 13–18 (RKAWRK) is interaction with SUMO1. C93 acts as the Glycyl thioester intermediate in catalysis.

The protein belongs to the ubiquitin-conjugating enzyme family. As to quaternary structure, interacts with SOX9.

The protein localises to the nucleus. Its subcellular location is the cytoplasm. It participates in protein modification; protein sumoylation. In terms of biological role, accepts the ubiquitin-like proteins SUMO1, SUMO2 and SUMO3 from the UBLE1A-UBLE1B E1 complex and catalyzes their covalent attachment to other proteins with the help of an E3 ligase such as RANBP2 or CBX4. Essential for nuclear architecture and chromosome segregation. The sequence is that of SUMO-conjugating enzyme UBC9 (UBE2I) from Gallus gallus (Chicken).